Consider the following 318-residue polypeptide: NADH-ubiquinone oxidoreductase chain 1 (318 aa).

A run of 9 helical transmembrane segments spans residues 2-22 (FLMN…FLTL), 37-57 (PNIV…KLFI), 69-89 (LMFT…WIPM), 100-120 (LGVL…LWSG), 136-156 (VAQT…VMMM), 171-191 (HMWL…STLA), 231-251 (IIMM…NPLF), 253-273 (ELFT…FLWV), and 293-313 (FLPL…LSAG).

This sequence belongs to the complex I subunit 1 family. Core subunit of respiratory chain NADH dehydrogenase (Complex I) which is composed of 45 different subunits.

The protein localises to the mitochondrion inner membrane. It carries out the reaction a ubiquinone + NADH + 5 H(+)(in) = a ubiquinol + NAD(+) + 4 H(+)(out). Its function is as follows. Core subunit of the mitochondrial membrane respiratory chain NADH dehydrogenase (Complex I) which catalyzes electron transfer from NADH through the respiratory chain, using ubiquinone as an electron acceptor. Essential for the catalytic activity and assembly of complex I. The protein is NADH-ubiquinone oxidoreductase chain 1 (MT-ND1) of Zaedyus pichiy (Pichi).